The following is a 295-amino-acid chain: Trimeric intracellular cation channel type A (295 aa).

Residues 1-18 (MEVLDVLNLGEIAQYFSK) are Lumenal-facing. The helical transmembrane segment at 19–37 (MAMFPVFDVAYYIVSILYL) threads the bilayer. Over 38–51 (KYEPGAVEVSRRSP) the chain is Cytoplasmic. Residues 52–75 (VASWLCAMLYCFGSYILADIMLGV) form a helical membrane-spanning segment. Gly-74 lines the Ca(2+) pocket. The Lumenal portion of the chain corresponds to 76–86 (CPIDYFHNNSH). The chain crosses the membrane as a helical span at residues 87 to 106 (ILLASAVWYLIFFCPLNLFY). Residues 107-144 (KCVAFMPVKLVLVALKEVVRTRKIAAGVHHAHHAYHHG) lie on the Cytoplasmic side of the membrane. A 1,2-diacyl-sn-glycero-3-phospho-(1D-myo-inositol-4,5-bisphosphate) is bound by residues Lys-122 and Arg-126. Residues 145 to 162 (WLIMVITGYVKGSGVALM) form a helical membrane-spanning segment. Residues 163 to 182 (SNFEQLLRGVWKPETNEVLN) are Lumenal-facing. The chain crosses the membrane as a helical span at residues 183-199 (MSFPTKASLYGAILFTL). Residues 200 to 210 (QEAHVLPVSKS) are Cytoplasmic-facing. Residues 211-227 (TLICLFTLFMVSSKVFM) form a helical membrane-spanning segment. Residues 228–236 (TARHSHGSP) lie on the Lumenal side of the membrane. A helical membrane pass occupies residues 237–255 (FALIESWVCHVLFGSPLGT). At 256-295 (EDAHDHHHAAPAAAPAPLSPAKNKEELSEGTRKRKSKKAE) the chain is on the cytoplasmic side. The interval 259–295 (HDHHHAAPAAAPAPLSPAKNKEELSEGTRKRKSKKAE) is disordered. The segment covering 265–276 (APAAAPAPLSPA) has biased composition (low complexity). Basic and acidic residues predominate over residues 277–286 (KNKEELSEGT).

The protein belongs to the TMEM38 family. In terms of assembly, homotrimer; conformation seems to be controled by binding to diacylglycerol (DAG).

The protein resides in the sarcoplasmic reticulum membrane. The protein localises to the nucleus membrane. It carries out the reaction K(+)(in) = K(+)(out). Its activity is regulated as follows. Channel activity is activated by a change of voltage within the sarcoplasmic reticulum lumen and blocked by luminal high Ca(2+) levels. In terms of biological role, intracellular monovalent cation channel required for maintenance of rapid intracellular calcium release. Acts as a potassium counter-ion channel that functions in synchronization with calcium release from intracellular stores. Opened by a change of voltage within the sarcoplasmic reticulum lumen. This is Trimeric intracellular cation channel type A (tmem38a) from Danio rerio (Zebrafish).